The chain runs to 100 residues: Aspartyl/glutamyl-tRNA(Asn/Gln) amidotransferase subunit C (100 aa).

The protein belongs to the GatC family. As to quaternary structure, heterotrimer of A, B and C subunits.

The catalysed reaction is L-glutamyl-tRNA(Gln) + L-glutamine + ATP + H2O = L-glutaminyl-tRNA(Gln) + L-glutamate + ADP + phosphate + H(+). It carries out the reaction L-aspartyl-tRNA(Asn) + L-glutamine + ATP + H2O = L-asparaginyl-tRNA(Asn) + L-glutamate + ADP + phosphate + 2 H(+). Allows the formation of correctly charged Asn-tRNA(Asn) or Gln-tRNA(Gln) through the transamidation of misacylated Asp-tRNA(Asn) or Glu-tRNA(Gln) in organisms which lack either or both of asparaginyl-tRNA or glutaminyl-tRNA synthetases. The reaction takes place in the presence of glutamine and ATP through an activated phospho-Asp-tRNA(Asn) or phospho-Glu-tRNA(Gln). The protein is Aspartyl/glutamyl-tRNA(Asn/Gln) amidotransferase subunit C of Streptococcus agalactiae serotype Ia (strain ATCC 27591 / A909 / CDC SS700).